We begin with the raw amino-acid sequence, 218 residues long: Thiopurine S-methyltransferase (218 aa).

Positions 10, 45, 66, and 123 each coordinate S-adenosyl-L-methionine.

This sequence belongs to the class I-like SAM-binding methyltransferase superfamily. TPMT family.

Its subcellular location is the cytoplasm. The enzyme catalyses S-adenosyl-L-methionine + a thiopurine = S-adenosyl-L-homocysteine + a thiopurine S-methylether.. The chain is Thiopurine S-methyltransferase from Pseudomonas aeruginosa (strain ATCC 15692 / DSM 22644 / CIP 104116 / JCM 14847 / LMG 12228 / 1C / PRS 101 / PAO1).